Here is a 137-residue protein sequence, read N- to C-terminus: Large-conductance mechanosensitive channel (137 aa).

The next 3 helical transmembrane spans lie at 15–35 (IDLA…NSIV), 38–58 (ILMP…MFIQ), and 80–100 (GNFI…FLFV).

This sequence belongs to the MscL family. In terms of assembly, homopentamer.

The protein resides in the cell inner membrane. Functionally, channel that opens in response to stretch forces in the membrane lipid bilayer. May participate in the regulation of osmotic pressure changes within the cell. This Bartonella quintana (strain Toulouse) (Rochalimaea quintana) protein is Large-conductance mechanosensitive channel.